Here is a 573-residue protein sequence, read N- to C-terminus: Potassium-transporting ATPase potassium-binding subunit (573 aa).

The next 10 membrane-spanning stretches (helical) occupy residues I6–I26, F66–L86, A135–I155, V177–V197, I257–V277, G283–I303, I382–F402, M428–I448, I493–L513, and F537–P557.

This sequence belongs to the KdpA family. As to quaternary structure, the system is composed of three essential subunits: KdpA, KdpB and KdpC.

It is found in the cell inner membrane. Functionally, part of the high-affinity ATP-driven potassium transport (or Kdp) system, which catalyzes the hydrolysis of ATP coupled with the electrogenic transport of potassium into the cytoplasm. This subunit binds the periplasmic potassium ions and delivers the ions to the membrane domain of KdpB through an intramembrane tunnel. The polypeptide is Potassium-transporting ATPase potassium-binding subunit (Francisella tularensis subsp. tularensis (strain WY96-3418)).